A 512-amino-acid polypeptide reads, in one-letter code: Cytochrome P450 monooxygenase paxQ (512 aa).

2 helical membrane-spanning segments follow: residues 3-23 (FVLSALQRDSWGIAAIILVSI) and 35-55 (LQIPVPYVGKCGILGPWISAL). Position 453 (Cys453) interacts with heme.

It belongs to the cytochrome P450 family. Heme serves as cofactor.

Its subcellular location is the membrane. Its pathway is secondary metabolite biosynthesis. In terms of biological role, cytochrome P450 monooxygenase; part of the gene cluster that mediates the biosynthesis of paxilline, a mycotoxin that acts as an inhibitor of mammalian maxi-K channels. PaxG, the geranylgeranyl diphosphate (GGPP) synthase is proposed to catalyze the first step in paxilline biosynthesis. Condensation of indole-3-glycerol phosphate with GGPP by paxC then forms 3-geranylgeranylindole (3-GGI), followed by epoxidation and cyclization of this intermediate (by paxM and paxB) to form paspaline. Paspaline is subsequently converted to 13-desoxypaxilline by paxP, the latter being then converted to paxilline by paxQ. Finally paxilline can be mono- and di-prenylated by paxD. PaxQ can also utilized beta-paxitriol and alpha-PC-M6 as substrates converting them to alpha-paxitriol. The polypeptide is Cytochrome P450 monooxygenase paxQ (Penicillium paxilli).